The primary structure comprises 267 residues: Proenkephalin-A (267 aa).

The first 24 residues, 1-24 (MARFLTLCTWLLLLGPGLLATVRA), serve as a signal peptide directing secretion. 3 disulfides stabilise this stretch: C26–C48, C30–C52, and C33–C65. Residues 163-175 (TGDNRERSHHQDG) show a composition bias toward basic and acidic residues. Residues 163 to 182 (TGDNRERSHHQDGSDNEEEV) form a disordered region. Propeptides lie at residues 196–207 (SPQLEDEAKELQ) and 217–227 (VGRPEWWMDYQ). A Phosphoserine modification is found at S251.

Belongs to the opioid neuropeptide precursor family. In terms of processing, proenkephalin-A is cleaved by CTSL to generate Met-enkephalin. Processed and degraded by ACE. Post-translationally, probably cleaved by ACE. In terms of processing, processed by ACE to generate Met-enkephalin in the nucleus accumbens of the brain. The N-terminal domain contains 6 conserved cysteines thought to be involved in disulfide bonding and/or processing.

Its subcellular location is the cytoplasmic vesicle. The protein resides in the secretory vesicle. It localises to the chromaffin granule lumen. It is found in the secreted. Functionally, neuropeptide that competes with and mimic the effects of opiate drugs. They play a role in a number of physiologic functions, including pain perception and responses to stress. Its function is as follows. Met-enkephalin-Arg-Phe neuropeptide acts as a strong ligand of Mu-type opioid receptor OPRM1. Met-enkephalin-Arg-Phe-binding to OPRM1 in the nucleus accumbens of the brain increases activation of OPRM1, leading to long-term synaptic depression of glutamate release. Increases glutamate release in the striatum and decreases GABA concentration in the striatum. In terms of biological role, increases glutamate release in the striatum. The chain is Proenkephalin-A from Homo sapiens (Human).